We begin with the raw amino-acid sequence, 151 residues long: Transcription factor ATOH7 (151 aa).

The 53-residue stretch at 39–91 (KRRLAANARERRRMQGLNTAFDRLRKVVPQWGQDKKLSKYETLQMALSYIMAL) folds into the bHLH domain.

Its subcellular location is the nucleus. The protein resides in the perikaryon. It is found in the cell projection. The protein localises to the axon. Its function is as follows. Transcription factor that binds to DNA at the consensus sequence 5'-CAG[GC]TG-3'. Positively regulates the determination of retinal ganglion cell fate and formation of the optic nerve and retino-hypothalamic tract. Required for retinal circadian rhythm photoentrainment. Plays a role in brainstem auditory signaling and binaural processing. During retinal neurogenesis, activates its own transcription, as well as the transcription of CHRNB3 and BRN3. This chain is Transcription factor ATOH7, found in Gallus gallus (Chicken).